Consider the following 118-residue polypeptide: MARIAGINVPTQKHAVIALTSIYGIGTSRAKEICAKANVAPDKKIRDLSDSEVEALRQVVSEYQVEGDLRRQVSMDIKRLMDLGCFRGLRHRRSLPVRGQRTKTNARTRKGPRRPIKR.

Positions 94–118 (SLPVRGQRTKTNARTRKGPRRPIKR) are disordered.

The protein belongs to the universal ribosomal protein uS13 family. In terms of assembly, part of the 30S ribosomal subunit. Forms a loose heterodimer with protein S19. Forms two bridges to the 50S subunit in the 70S ribosome.

Located at the top of the head of the 30S subunit, it contacts several helices of the 16S rRNA. In the 70S ribosome it contacts the 23S rRNA (bridge B1a) and protein L5 of the 50S subunit (bridge B1b), connecting the 2 subunits; these bridges are implicated in subunit movement. Contacts the tRNAs in the A and P-sites. In Dichelobacter nodosus (strain VCS1703A), this protein is Small ribosomal subunit protein uS13.